Reading from the N-terminus, the 587-residue chain is Deoxynucleoside triphosphate triphosphohydrolase sahd-1 (587 aa).

The region spanning 92-262 is the HD domain; sequence RFVHSLGTFS…GHDVDKMDYL (171 aa). Zn(2+) contacts are provided by His95, His134, Asp135, and Asp257. Residues 554-587 are disordered; sequence EKFLTPRKRSPQDSPDEVSSSCSTAKRRLEFGSS. Thr558 is modified (phosphothreonine).

Belongs to the SAMHD1 family. In terms of assembly, homodimer. Homotetramer; in dGTP-bound form. Zn(2+) is required as a cofactor.

It is found in the nucleus. It localises to the chromosome. The catalysed reaction is a 2'-deoxyribonucleoside 5'-triphosphate + H2O = a 2'-deoxyribonucleoside + triphosphate + H(+). Its activity is regulated as follows. Allosterically activated and regulated by GTP or dGTP. Allosteric activation promotes the formation of highly active homotetramers. Phosphorylation impairs homotetramerization, thereby inhibiting dNTPase activity. Functionally, has deoxynucleoside triphosphate (dNTPase) activity. dNTPase activity acts as a regulator of DNA precursor pools by regulating dNTP pools. Phosphorylation acts as a switch to control dNTPase-dependent and -independent functions. The polypeptide is Deoxynucleoside triphosphate triphosphohydrolase sahd-1 (Caenorhabditis elegans).